We begin with the raw amino-acid sequence, 232 residues long: Large ribosomal subunit protein uL1 (232 aa).

It belongs to the universal ribosomal protein uL1 family. Part of the 50S ribosomal subunit.

Binds directly to 23S rRNA. The L1 stalk is quite mobile in the ribosome, and is involved in E site tRNA release. Functionally, protein L1 is also a translational repressor protein, it controls the translation of the L11 operon by binding to its mRNA. This Burkholderia vietnamiensis (strain G4 / LMG 22486) (Burkholderia cepacia (strain R1808)) protein is Large ribosomal subunit protein uL1.